The primary structure comprises 570 residues: Protein misato homolog 1 (570 aa).

Position 495 is a phosphoserine (S495).

Belongs to the misato family. Present in all cell lines tested (at protein level). Widely expressed.

The protein resides in the mitochondrion outer membrane. It is found in the cytoplasm. Its function is as follows. Involved in the regulation of mitochondrial distribution and morphology. Required for mitochondrial fusion and mitochondrial network formation. This is Protein misato homolog 1 (MSTO1) from Homo sapiens (Human).